A 426-amino-acid chain; its full sequence is Histidine--tRNA ligase (426 aa).

Belongs to the class-II aminoacyl-tRNA synthetase family. Homodimer.

It is found in the cytoplasm. It carries out the reaction tRNA(His) + L-histidine + ATP = L-histidyl-tRNA(His) + AMP + diphosphate + H(+). The chain is Histidine--tRNA ligase from Hydrogenovibrio crunogenus (strain DSM 25203 / XCL-2) (Thiomicrospira crunogena).